The chain runs to 1128 residues: Cordon-bleu protein-like 1 (1128 aa).

Positions 1–35 (MDGRTPRPQDAPARRKPKAKAPLPPAETKYTDVSS) are disordered. T139 carries the post-translational modification Phosphothreonine. 3 positions are modified to phosphoserine: S204, S222, and S256. 3 disordered regions span residues 249–309 (KKRD…VPQD), 325–441 (MSVD…SPKS), and 454–499 (TLKN…TSNG). T260 bears the Phosphothreonine mark. Residues 270-286 (FTRSNTISKPYISNTLP) show a composition bias toward polar residues. S273 carries the post-translational modification Phosphoserine. T284 bears the Phosphothreonine mark. Residues 291-296 (KKRRAP) carry the KKRRAP 1 motif. Phosphoserine occurs at positions 326, 333, 344, and 356. Residues 345-357 (LQLSSMSAGNSSL) are compositionally biased toward polar residues. The KKRRAP 2 motif lies at 360 to 365 (TKRKAP). The span at 397 to 415 (SEANSPEELSSPAGISSDY) shows a compositional bias: polar residues. The segment covering 416–425 (SLEEIDEKEE) has biased composition (acidic residues). Phosphoserine is present on residues S438, S441, S461, S471, and S474. Basic and acidic residues predominate over residues 475–488 (MEEKQETKSTDGQE). A phosphoserine mark is found at S563, S584, S786, S813, S814, and S821. Disordered stretches follow at residues 780 to 840 (TEDS…PFAP), 882 to 964 (SAAA…SQVS), 995 to 1081 (RSQS…PEQM), and 1103 to 1128 (IPSN…QDGH). The span at 899 to 908 (LTNKEAERDM) shows a compositional bias: basic and acidic residues. Residues S911, S917, S947, S1069, and S1070 each carry the phosphoserine modification. Composition is skewed to polar residues over residues 1045–1081 (SAHN…PEQM) and 1103–1122 (IPSN…SMSP). The region spanning 1081-1101 (MRQSLLTAIRSGEAAAKLKRV) is the WH2 domain. Residue S1121 is modified to Phosphoserine.

The polypeptide is Cordon-bleu protein-like 1 (Homo sapiens (Human)).